Here is a 247-residue protein sequence, read N- to C-terminus: Probable transcriptional regulatory protein lpp1249 (247 aa).

The protein belongs to the TACO1 family.

Its subcellular location is the cytoplasm. The protein is Probable transcriptional regulatory protein lpp1249 of Legionella pneumophila (strain Paris).